The chain runs to 550 residues: Leiomodin-2 (550 aa).

The tract at residues 1-47 (MSTFGYRRGLSKYESIDEDELLASLSPEELKELERELEDIEPDRNLP) is interaction with tropomyosin alpha. 3 interaction with actin regions span residues 1–165 (MSTF…TDNS), 166–500 (KPKT…KEIK), and 524–543 (VHEN…LRRV). A phosphoserine mark is found at Ser11, Ser15, and Ser24. Residues 84-94 (ERLGECGKVAE) are compositionally biased toward basic and acidic residues. Disordered regions lie at residues 84-202 (ERLG…PCGN) and 359-527 (MDKQ…VHEN). Positions 91–147 (KVAEEDKEESEEELIFTESNSEVSEEVCTEDEEESQEEEEDSEEEEDSEEEEETTEA) form a coiled coil. Composition is skewed to acidic residues over residues 95 to 105 (EDKEESEEELI) and 113 to 145 (VSEE…EETT). 2 stretches are compositionally biased toward polar residues: residues 151–164 (INGT…NTDN) and 170–193 (FKSQ…NSES). Basic and acidic residues predominate over residues 359–377 (MDKQRQKRMQEQKQQEGHD). A compositionally biased stretch (polar residues) spans 391 to 402 (TPGSSPYASPRQ). Ser407 is modified (phosphoserine). Residues 421 to 452 (PPSPVAPPPPPPPPPLPPHMLPPPPPPPAPPL) are compositionally biased toward pro residues. The segment covering 468 to 479 (QQESAQRALQNG) has biased composition (polar residues). Residues 480–490 (QRKKKGKKVKK) show a composition bias toward basic residues. Residues 497–515 (KEIKNSLRSVQEKKMEDSS) show a composition bias toward basic and acidic residues. Residues 524–543 (VHENLMEAIRGSSIRQLRRV) enclose the WH2 domain.

Belongs to the tropomodulin family. In terms of assembly, can bind at least three actin monomers and thereby provides a nucleus for actin filament formation. Interacts (via N-terminus) with tropomyosin alpha (TPM1) (via N-terminus). May also interact with TPM2 (via N-terminus). Interacts with FLII. Detected in neonate heart (at protein level). Detected in embryonic heart and in pharyngeal arches. Detected in adult heart.

It localises to the cytoplasm. It is found in the myofibril. The protein resides in the sarcomere. The protein localises to the m line. Its subcellular location is the cytoskeleton. Its function is as follows. Mediates nucleation of actin filaments and thereby promotes actin polymerization. Plays a role in the regulation of actin filament length. Required for normal sarcomere organization in the heart, and for normal heart function. The polypeptide is Leiomodin-2 (Lmod2) (Mus musculus (Mouse)).